A 239-amino-acid chain; its full sequence is Small ribosomal subunit protein eS6B (239 aa).

Phosphoserine is present on residues serine 148, serine 235, and serine 236.

This sequence belongs to the eukaryotic ribosomal protein eS6 family. As to quaternary structure, component of the small ribosomal subunit (SSU). Mature yeast ribosomes consist of a small (40S) and a large (60S) subunit. The 40S small subunit contains 1 molecule of ribosomal RNA (18S rRNA) and at least 33 different proteins. The large 60S subunit contains 3 rRNA molecules (25S, 5.8S and 5S rRNA) and at least 46 different proteins. Interacts with snoRNA U3. uS11 interacts with MPP10. Component of the ribosomal small subunit (SSU) processome composed of at least 40 protein subunits and snoRNA U3.

Its subcellular location is the cytoplasm. Component of the ribosome, a large ribonucleoprotein complex responsible for the synthesis of proteins in the cell. The small ribosomal subunit (SSU) binds messenger RNAs (mRNAs) and translates the encoded message by selecting cognate aminoacyl-transfer RNA (tRNA) molecules. The large subunit (LSU) contains the ribosomal catalytic site termed the peptidyl transferase center (PTC), which catalyzes the formation of peptide bonds, thereby polymerizing the amino acids delivered by tRNAs into a polypeptide chain. The nascent polypeptides leave the ribosome through a tunnel in the LSU and interact with protein factors that function in enzymatic processing, targeting, and the membrane insertion of nascent chains at the exit of the ribosomal tunnel. eS6 is involved in nucleolar processing of pre-18S ribosomal RNA and ribosome assembly. This chain is Small ribosomal subunit protein eS6B (rps602), found in Schizosaccharomyces pombe (strain 972 / ATCC 24843) (Fission yeast).